Here is a 467-residue protein sequence, read N- to C-terminus: A-type ATP synthase subunit B (467 aa).

The segment at 95–114 (GKGQPRDHMPLPPPEDFRDV) is disordered.

Belongs to the ATPase alpha/beta chains family. Has multiple subunits with at least A(3), B(3), C, D, E, F, H, I and proteolipid K(x).

The protein localises to the cell membrane. Its function is as follows. Component of the A-type ATP synthase that produces ATP from ADP in the presence of a proton gradient across the membrane. The B chain is a regulatory subunit. In Pyrobaculum neutrophilum (strain DSM 2338 / JCM 9278 / NBRC 100436 / V24Sta) (Thermoproteus neutrophilus), this protein is A-type ATP synthase subunit B.